A 338-amino-acid chain; its full sequence is Methionine import ATP-binding protein MetN 2 (338 aa).

The ABC transporter domain occupies 2–242 (IEIEKVCVDF…PQHAFTQQLV (241 aa)). 39 to 46 (GTSGAGKS) serves as a coordination point for ATP.

The protein belongs to the ABC transporter superfamily. Methionine importer (TC 3.A.1.24) family. As to quaternary structure, the complex is composed of two ATP-binding proteins (MetN), two transmembrane proteins (MetI) and a solute-binding protein (MetQ).

It localises to the cell inner membrane. It catalyses the reaction L-methionine(out) + ATP + H2O = L-methionine(in) + ADP + phosphate + H(+). It carries out the reaction D-methionine(out) + ATP + H2O = D-methionine(in) + ADP + phosphate + H(+). In terms of biological role, part of the ABC transporter complex MetNIQ involved in methionine import. Responsible for energy coupling to the transport system. This Salmonella choleraesuis (strain SC-B67) protein is Methionine import ATP-binding protein MetN 2.